A 555-amino-acid polypeptide reads, in one-letter code: E3 ubiquitin-protein ligase NEURL1B (555 aa).

The NHR 1 domain occupies Ala38–Ser194. Residue Thr199 is modified to Phosphothreonine. One can recognise an NHR 2 domain in the interval Asp279–Gly433. The interval Gln436–Pro493 is disordered. Positions Ser462–Ser480 are enriched in low complexity. The segment covering Pro481–Pro493 has biased composition (pro residues). The RING-type zinc-finger motif lies at Cys503 to Arg543.

In terms of assembly, interacts with JAG1, DLL1 and DLL4. Highest expression in brain, prostate and small intestine. In the brain the levels are higher in fetal than in adult stage. In the adult brain the highest levels are detected in the olfactory system, cerebellar cortex, optic nerve and the frontal lobe.

The protein localises to the cytoplasm. The enzyme catalyses S-ubiquitinyl-[E2 ubiquitin-conjugating enzyme]-L-cysteine + [acceptor protein]-L-lysine = [E2 ubiquitin-conjugating enzyme]-L-cysteine + N(6)-ubiquitinyl-[acceptor protein]-L-lysine.. It functions in the pathway protein modification; protein ubiquitination. Its function is as follows. E3 ubiquitin-protein ligase involved in regulation of the Notch pathway through influencing the stability and activity of several Notch ligands. This chain is E3 ubiquitin-protein ligase NEURL1B (NEURL1B), found in Homo sapiens (Human).